Reading from the N-terminus, the 65-residue chain is Large ribosomal subunit protein uL29 (65 aa).

Belongs to the universal ribosomal protein uL29 family.

The sequence is that of Large ribosomal subunit protein uL29 from Acidithiobacillus ferrooxidans (strain ATCC 23270 / DSM 14882 / CIP 104768 / NCIMB 8455) (Ferrobacillus ferrooxidans (strain ATCC 23270)).